Consider the following 84-residue polypeptide: ATP synthase subunit c (84 aa).

A run of 2 helical transmembrane segments spans residues 9–29 and 54–74; these read IIGA…GFAI and IVAG…LLFI.

The protein belongs to the ATPase C chain family. As to quaternary structure, F-type ATPases have 2 components, F(1) - the catalytic core - and F(0) - the membrane proton channel. F(1) has five subunits: alpha(3), beta(3), gamma(1), delta(1), epsilon(1). F(0) has three main subunits: a(1), b(2) and c(10-14). The alpha and beta chains form an alternating ring which encloses part of the gamma chain. F(1) is attached to F(0) by a central stalk formed by the gamma and epsilon chains, while a peripheral stalk is formed by the delta and b chains.

The protein localises to the cell inner membrane. Functionally, f(1)F(0) ATP synthase produces ATP from ADP in the presence of a proton or sodium gradient. F-type ATPases consist of two structural domains, F(1) containing the extramembraneous catalytic core and F(0) containing the membrane proton channel, linked together by a central stalk and a peripheral stalk. During catalysis, ATP synthesis in the catalytic domain of F(1) is coupled via a rotary mechanism of the central stalk subunits to proton translocation. Its function is as follows. Key component of the F(0) channel; it plays a direct role in translocation across the membrane. A homomeric c-ring of between 10-14 subunits forms the central stalk rotor element with the F(1) delta and epsilon subunits. This Actinobacillus pleuropneumoniae serotype 7 (strain AP76) protein is ATP synthase subunit c.